The following is a 467-amino-acid chain: 3-isopropylmalate dehydratase large subunit (467 aa).

Residues Cys347, Cys407, and Cys410 each coordinate [4Fe-4S] cluster. Over residues 422-442 the composition is skewed to polar residues; that stretch reads QISASSSNRNFKGRQGSSSGR. Positions 422-443 are disordered; sequence QISASSSNRNFKGRQGSSSGRT.

It belongs to the aconitase/IPM isomerase family. LeuC type 1 subfamily. In terms of assembly, heterodimer of LeuC and LeuD. [4Fe-4S] cluster serves as cofactor.

The enzyme catalyses (2R,3S)-3-isopropylmalate = (2S)-2-isopropylmalate. It functions in the pathway amino-acid biosynthesis; L-leucine biosynthesis; L-leucine from 3-methyl-2-oxobutanoate: step 2/4. In terms of biological role, catalyzes the isomerization between 2-isopropylmalate and 3-isopropylmalate, via the formation of 2-isopropylmaleate. The chain is 3-isopropylmalate dehydratase large subunit from Nostoc punctiforme (strain ATCC 29133 / PCC 73102).